Consider the following 394-residue polypeptide: Elongation factor Tu 2 (394 aa).

The tr-type G domain occupies 10–204 (KPHVNVGTIG…ALDNYIPEPE (195 aa)). The segment at 19-26 (GHVDHGKT) is G1. A GTP-binding site is contributed by 19-26 (GHVDHGKT). T26 serves as a coordination point for Mg(2+). Positions 60-64 (GITIS) are G2. Residues 81-84 (DCPG) are G3. Residues 81–85 (DCPGH) and 136–139 (NKCD) contribute to the GTP site. Residues 136 to 139 (NKCD) form a G4 region. Residues 174–176 (SAL) form a G5 region.

Belongs to the TRAFAC class translation factor GTPase superfamily. Classic translation factor GTPase family. EF-Tu/EF-1A subfamily. As to quaternary structure, monomer.

It is found in the cytoplasm. The catalysed reaction is GTP + H2O = GDP + phosphate + H(+). Its function is as follows. GTP hydrolase that promotes the GTP-dependent binding of aminoacyl-tRNA to the A-site of ribosomes during protein biosynthesis. The chain is Elongation factor Tu 2 from Photobacterium profundum (strain SS9).